The chain runs to 350 residues: Alcohol dehydrogenase (350 aa).

Cys46 serves as a coordination point for Zn(2+). NAD(+) contacts are provided by His47, Thr48, and His51. Residues His69, Cys100, Cys103, Cys106, Cys114, and Cys156 each contribute to the Zn(2+) site. NAD(+)-binding residues include Gly183, Gly184, Leu185, and Asp204. Thr205 carries the post-translational modification Phosphothreonine. 2 residues coordinate NAD(+): Lys209 and Phe224. Position 250 is a phosphothreonine (Thr250). NAD(+) is bound by residues Val271, Met273, Ser296, Val298, and Arg343.

The protein belongs to the zinc-containing alcohol dehydrogenase family. As to quaternary structure, homotetramer. Zn(2+) is required as a cofactor.

The protein resides in the cytoplasm. The catalysed reaction is a primary alcohol + NAD(+) = an aldehyde + NADH + H(+). The enzyme catalyses a secondary alcohol + NAD(+) = a ketone + NADH + H(+). It carries out the reaction ethanol + NAD(+) = acetaldehyde + NADH + H(+). In terms of biological role, reduces acetaldehyde to ethanol during the fermentation of glucose. The chain is Alcohol dehydrogenase (adh1) from Schizosaccharomyces pombe (strain 972 / ATCC 24843) (Fission yeast).